The following is a 92-amino-acid chain: Small ribosomal subunit protein uS19c (92 aa).

It belongs to the universal ribosomal protein uS19 family.

It localises to the plastid. The protein resides in the chloroplast. Protein S19 forms a complex with S13 that binds strongly to the 16S ribosomal RNA. The sequence is that of Small ribosomal subunit protein uS19c from Oltmannsiellopsis viridis (Marine flagellate).